Reading from the N-terminus, the 156-residue chain is Ribonuclease 1B pancreatic (156 aa).

Residues 1-28 (MALDKSVIPLPLLVVVLLVLGWAQPSLG) form the signal peptide. Positions 35 and 38 each coordinate substrate. Catalysis depends on histidine 40, which acts as the Proton acceptor. 4 cysteine pairs are disulfide-bonded: cysteine 54–cysteine 112, cysteine 68–cysteine 123, cysteine 86–cysteine 138, and cysteine 93–cysteine 100. The N-linked (GlcNAc...) asparagine glycan is linked to asparagine 62. Substrate contacts are provided by residues 69–73 (KSVNT), lysine 94, and arginine 113. Asparagine 116 carries an N-linked (GlcNAc...) asparagine glycan. The active-site Proton donor is histidine 147.

This sequence belongs to the pancreatic ribonuclease family. Monomer.

It localises to the secreted. It catalyses the reaction an [RNA] containing cytidine + H2O = an [RNA]-3'-cytidine-3'-phosphate + a 5'-hydroxy-ribonucleotide-3'-[RNA].. The catalysed reaction is an [RNA] containing uridine + H2O = an [RNA]-3'-uridine-3'-phosphate + a 5'-hydroxy-ribonucleotide-3'-[RNA].. Its function is as follows. Endonuclease that catalyzes the cleavage of RNA on the 3' side of pyrimidine nucleotides. Compared to RNASE1 it has lost activity towards dsRNA. The protein is Ribonuclease 1B pancreatic (RNASE1B) of Pygathrix nemaeus (Red-shanked douc langur).